A 228-amino-acid chain; its full sequence is Cytochrome c oxidase subunit 2 (228 aa).

Residues 1–26 lie on the Mitochondrial intermembrane side of the membrane; the sequence is MATWNNLNLQNGASPLMEQIIFFHDH. Residues 27 to 48 form a helical membrane-spanning segment; it reads TLIILIMITILVGYLMINLFFN. At 49-62 the chain is on the mitochondrial matrix side; the sequence is KYINRFLLEGQMIE. Residues 63 to 82 form a helical membrane-spanning segment; the sequence is LIWTILPAITLIFIALPSLR. The Mitochondrial intermembrane portion of the chain corresponds to 83-228; it reads LLYLLDELNN…FIKWINNYSS (146 aa). Cu cation-binding residues include H161, C196, E198, C200, H204, and M207. A Mg(2+)-binding site is contributed by E198.

This sequence belongs to the cytochrome c oxidase subunit 2 family. Component of the cytochrome c oxidase (complex IV, CIV), a multisubunit enzyme composed of a catalytic core of 3 subunits and several supernumerary subunits. The complex exists as a monomer or a dimer and forms supercomplexes (SCs) in the inner mitochondrial membrane with ubiquinol-cytochrome c oxidoreductase (cytochrome b-c1 complex, complex III, CIII). Requires Cu cation as cofactor.

The protein resides in the mitochondrion inner membrane. It carries out the reaction 4 Fe(II)-[cytochrome c] + O2 + 8 H(+)(in) = 4 Fe(III)-[cytochrome c] + 2 H2O + 4 H(+)(out). In terms of biological role, component of the cytochrome c oxidase, the last enzyme in the mitochondrial electron transport chain which drives oxidative phosphorylation. The respiratory chain contains 3 multisubunit complexes succinate dehydrogenase (complex II, CII), ubiquinol-cytochrome c oxidoreductase (cytochrome b-c1 complex, complex III, CIII) and cytochrome c oxidase (complex IV, CIV), that cooperate to transfer electrons derived from NADH and succinate to molecular oxygen, creating an electrochemical gradient over the inner membrane that drives transmembrane transport and the ATP synthase. Cytochrome c oxidase is the component of the respiratory chain that catalyzes the reduction of oxygen to water. Electrons originating from reduced cytochrome c in the intermembrane space (IMS) are transferred via the dinuclear copper A center (CU(A)) of subunit 2 and heme A of subunit 1 to the active site in subunit 1, a binuclear center (BNC) formed by heme A3 and copper B (CU(B)). The BNC reduces molecular oxygen to 2 water molecules using 4 electrons from cytochrome c in the IMS and 4 protons from the mitochondrial matrix. The sequence is that of Cytochrome c oxidase subunit 2 (COII) from Yponomeuta malinellus (European small ermine moth).